Here is a 94-residue protein sequence, read N- to C-terminus: CRISPR-associated endoribonuclease Cas2 (94 aa).

Aspartate 11 is a binding site for Mg(2+).

This sequence belongs to the CRISPR-associated endoribonuclease Cas2 protein family. Homodimer, forms a heterotetramer with a Cas1 homodimer. It depends on Mg(2+) as a cofactor.

Its function is as follows. CRISPR (clustered regularly interspaced short palindromic repeat), is an adaptive immune system that provides protection against mobile genetic elements (viruses, transposable elements and conjugative plasmids). CRISPR clusters contain sequences complementary to antecedent mobile elements and target invading nucleic acids. CRISPR clusters are transcribed and processed into CRISPR RNA (crRNA). Functions as a ssRNA-specific endoribonuclease. Involved in the integration of spacer DNA into the CRISPR cassette. The chain is CRISPR-associated endoribonuclease Cas2 from Thermus thermophilus (strain ATCC 27634 / DSM 579 / HB8).